Reading from the N-terminus, the 358-residue chain is MIGFAPISAPDALAEAAARARQDALTKPRGALGRLEDLSAWVASCQGQCPPRQFQRARVVVFAGDHGITRSGVSAYPPDATAQMVANIDGGGAAINALADVAGATVRVVDLAVDAEALSEQIGAHKVRRGSGDIATEDALTDDQTAAAIAAGQQIADAEVDAGADLLIAGDMGIGNTTPAAVLVAALTNTEPVAVVGFGTGVDDATWSRKTAAVRDALFRSARVLPDPVALLRCCGGADLAAMAGFCAQAAVRRTPLLLDGMAVTAAALVAERLAPGARQWWQAGHRSTEPGHQLALTALALDPVVDLRMRLGEGTGATVALPVLRAAVAALSSMATFAEAGVSTACDDAGATEPPES.

Glutamate 314 acts as the Proton acceptor in catalysis.

Belongs to the CobT family.

The enzyme catalyses 5,6-dimethylbenzimidazole + nicotinate beta-D-ribonucleotide = alpha-ribazole 5'-phosphate + nicotinate + H(+). It participates in nucleoside biosynthesis; alpha-ribazole biosynthesis; alpha-ribazole from 5,6-dimethylbenzimidazole: step 1/2. Functionally, catalyzes the synthesis of alpha-ribazole-5'-phosphate from nicotinate mononucleotide (NAMN) and 5,6-dimethylbenzimidazole (DMB). This Mycobacterium ulcerans (strain Agy99) protein is Nicotinate-nucleotide--dimethylbenzimidazole phosphoribosyltransferase.